The chain runs to 425 residues: Serine hydroxymethyltransferase (425 aa).

(6S)-5,6,7,8-tetrahydrofolate is bound by residues leucine 120 and 124 to 126 (GHL). An N6-(pyridoxal phosphate)lysine modification is found at lysine 229. A (6S)-5,6,7,8-tetrahydrofolate-binding site is contributed by 353 to 355 (SPF).

The protein belongs to the SHMT family. As to quaternary structure, homodimer. Pyridoxal 5'-phosphate is required as a cofactor.

The protein localises to the cytoplasm. The enzyme catalyses (6R)-5,10-methylene-5,6,7,8-tetrahydrofolate + glycine + H2O = (6S)-5,6,7,8-tetrahydrofolate + L-serine. It participates in one-carbon metabolism; tetrahydrofolate interconversion. Its pathway is amino-acid biosynthesis; glycine biosynthesis; glycine from L-serine: step 1/1. Functionally, catalyzes the reversible interconversion of serine and glycine with tetrahydrofolate (THF) serving as the one-carbon carrier. This reaction serves as the major source of one-carbon groups required for the biosynthesis of purines, thymidylate, methionine, and other important biomolecules. Also exhibits THF-independent aldolase activity toward beta-hydroxyamino acids, producing glycine and aldehydes, via a retro-aldol mechanism. In Thermosynechococcus vestitus (strain NIES-2133 / IAM M-273 / BP-1), this protein is Serine hydroxymethyltransferase.